The primary structure comprises 1918 residues: MEERRPHLDARPRNSHTNHRGPVDGELPPRARNQANNPPANALRGGASHPGRHPRANNHPAAYWQREERFRAMGRNPHQGRRNQEGHASDEARDQRHDQENDTRWRNGNQDCRNRRPPWSNDNFQQWRTPHQKPTEQPQQAKKLGYKFLESLLQKDPSEVVITLATSLGLKELLSHSSMKSNFLELICQVLRKACSSKMDRQSVLHVLGILKNSKFLKVCLPAYVVGMITEPIPDIRNQYPEHISNIISLLQDLVSVFPASSVQETSMLVSLLPTSLNALRASGVDIEEETEKNLEKVQTIIEHLQEKRREGTLRVDTYTLVQPEAEDHVESYRTMPIYPTYNEVHLDERPFLRPNIISGKYDSTAIYLDTHFRLLREDFVRPLREGILELLQSFEDQGLRKRKFDDIRIYFDTRIITPMCSSSGIVYKVQFDTKPLKFVRWQNSKRLLYGSLVCMSKDNFETFLFATVSNREQEDLCRGIVQLCFNEQSQQLLAEVQPSDSFLMVETTAYFEAYRHVLEGLQEVQEEDVPFQRNIVECNSHVKEPRYLLMGGRYDFTPLIENPSATGEFLRNVEGLRHPRINVLDPGQWPSKEALKLDDSQMEALQFALTRELAIIQGPPGTGKTYVGLKIVQALLTNESVWQISLQKFPILVVCYTNHALDQFLEGIYNCQKTSIVRVGGRSNSEILKQFTLRELRNKREFRRNLPMHLRRAYMSIMTQMKESEQELHEGAKTLECTMRGVLREQYLQKYISPQHWESLMNGPVQDSEWICFQHWKHSMMLEWLGLGVGSFTQSVSPAGPENTAQAEGDEEEEGEEESSLIEIAEEADLIQADRVIEEEEVVRPQRRKKEESGADQELAKMLLAMRLDHCGTGTAAGQEQATGEWQTQRNQKKKMKKRVKDELRKLNTMTAAEANEIEDVWQLDLSSRWQLYRLWLQLYQADTRRKILSYERQYRTSAERMAELRLQEDLHILKDAQVVGMTTTGAAKYRQILQKVEPRIVIVEEAAEVLEAHTIATLSKACQHLILIGDHQQLRPSANVYDLAKNFNLEVSLFERLVKVNIPFVRLNYQHRMCPEIARLLTPHIYQDLENHPSVLKYEKIKGVSSNLFFVEHNFPEQEIQEGKSHQNQHEAHFVVELCKYFLCQEYLPSQITILTTYTGQLFCLRKLMPAKTFAGVRVHVVDKYQGEENDIILLSLVRSNQEGKVGFLQISNRICVALSRAKKGMYCIGNMQMLAKVPLWSKIIHTLRENNQIGPMLRLCCQNHPETHTLVSKASDFQKVPEGGCSLPCEFRLGCGHVCTRACHPYDSSHKEFQCMKPCQKVICQEGHRCPLVCFQECQPCQVKVPKTIPRCGHEQMVPCSVPESDFCCQEPCSKSLRCGHRCSHPCGEDCVQLCSEMVTIKLKCGHSQPVKCGHVEGLLYGGLLVKCTTKCGTILDCGHPCPGSCHSCFEGRFHERCQQPCKRLLICSHKCQEPCIGECPPCQRTCQNRCVHSQCKKKCGELCSPCVEPCVWRCQHYQCTKLCSEPCNRPPCYVPCTKLLVCGHPCIGLCGEPCPKKCRICHMDEVTQIFFGFEDEPDARFVQLEDCSHIFEVQALDRYMNEQKDDEVAIRLKVCPICQVPIRKNLRYGTSIKQRLEEIEIIKEKIQGSAGEIATSQERLKALLERKSLLHQLLPEDFLMLKEKLAQKNLSVKDLGLVENYISFYDHLASLWDSLKKMHVLEEKRVRTRLEQVHEWLAKKRLSFTSQELSDLRSEIQRLTYLVNLLTRYKIAEKKVKDSIAVEVYSVQNILEKTCKFTQEDEQLVQEKMEALKATLPCSGLGISEEERVQIVSAIGYPRGHWFKCRNGHIYVIGDCGGAMERGTCPDCKEVIGGTNHTLERSNQLASEMDGAQHAAWSDTANNLMNFEEIQGMM.

The segment covering 1-12 has biased composition (basic and acidic residues); the sequence is MEERRPHLDARP. Disordered stretches follow at residues 1–58 and 75–140; these read MEER…RANN and RNPH…QPQQ. The span at 30–42 shows a compositional bias: low complexity; it reads RARNQANNPPANA. A compositionally biased stretch (basic and acidic residues) spans 82–105; it reads RNQEGHASDEARDQRHDQENDTRW. The span at 120-129 shows a compositional bias: polar residues; sequence SNDNFQQWRT. Residues 286-313 are a coiled coil; the sequence is DIEEETEKNLEKVQTIIEHLQEKRREGT. 2 disordered regions span residues 796–819 and 876–896; these read SVSP…GEEE and TAAG…QKKK. Acidic residues predominate over residues 809–819; that stretch reads EGDEEEEGEEE. Residues 877 to 887 show a composition bias toward polar residues; the sequence is AAGQEQATGEW. Positions 886-967 form a coiled coil; it reads EWQTQRNQKK…TSAERMAELR (82 aa). 6 NF-X1-type zinc fingers span residues 1298-1320, 1330-1346, 1382-1400, 1441-1463, 1471-1488, and 1546-1564; these read CGHV…QCMK, GHRC…PCQV, CGHR…LCSE, CGHP…RCQQ, CSHK…PCQR, and CGHP…KCRI. The stretch at 1741–1820 forms a coiled coil; sequence LAKKRLSFTS…EKMEALKATL (80 aa). Residues 1827 to 1898 form an RZ-type zinc finger; it reads ISEEERVQIV…LASEMDGAQH (72 aa). Zn(2+) is bound by residues Cys-1849, His-1853, Cys-1869, and Cys-1872.

The protein belongs to the ZNFX1 family. Interacts with MAVS. As to expression, widely expressed.

It is found in the mitochondrion outer membrane. Its subcellular location is the cytoplasm. It localises to the stress granule. Functionally, RNA-binding protein that initiates the antiviral response and is required to restrict the replication of RNA viruses. Acts as a double-stranded RNA (dsRNA) sensor that recognizes viral RNA and then interacts with MAVS to initiate the type I interferon response. Also required for immunity against some bacteria, such as mycobacteria. This Homo sapiens (Human) protein is NFX1-type zinc finger-containing protein 1.